The sequence spans 285 residues: Probable endonuclease 4 (285 aa).

Residues H69, H109, E145, D179, H182, H216, D229, H231, and E261 each coordinate Zn(2+).

It belongs to the AP endonuclease 2 family. It depends on Zn(2+) as a cofactor.

The catalysed reaction is Endonucleolytic cleavage to 5'-phosphooligonucleotide end-products.. Endonuclease IV plays a role in DNA repair. It cleaves phosphodiester bonds at apurinic or apyrimidinic (AP) sites, generating a 3'-hydroxyl group and a 5'-terminal sugar phosphate. This Escherichia coli O81 (strain ED1a) protein is Probable endonuclease 4.